A 144-amino-acid polypeptide reads, in one-letter code: Cathelicidin-4 (144 aa).

An N-terminal signal peptide occupies residues 1 to 29; sequence MQTQRASLSLGRWSLWLLLLGLVVPSASA. Residues 30–130 constitute a propeptide that is removed on maturation; sequence QALSYREAVL…DLNCNELQSV (101 aa). Intrachain disulfides connect cysteine 85/cysteine 96 and cysteine 107/cysteine 124. An Arginine amide modification is found at arginine 143.

Belongs to the cathelicidin family. Post-translationally, elastase might be responsible for its maturation. Large granules of neutrophils.

It localises to the secreted. Functionally, potent microbicidal activity; active against S.aureus and E.coli. This chain is Cathelicidin-4 (CATHL4), found in Bos taurus (Bovine).